Here is a 218-residue protein sequence, read N- to C-terminus: Uracil-DNA glycosylase (218 aa).

Aspartate 60 functions as the Proton acceptor in the catalytic mechanism.

Belongs to the uracil-DNA glycosylase (UDG) superfamily. UNG family.

It is found in the cytoplasm. The enzyme catalyses Hydrolyzes single-stranded DNA or mismatched double-stranded DNA and polynucleotides, releasing free uracil.. Excises uracil residues from the DNA which can arise as a result of misincorporation of dUMP residues by DNA polymerase or due to deamination of cytosine. The polypeptide is Uracil-DNA glycosylase (Francisella philomiragia subsp. philomiragia (strain ATCC 25017 / CCUG 19701 / FSC 153 / O#319-036)).